Consider the following 327-residue polypeptide: Glycerol-3-phosphate dehydrogenase [NAD(P)+] (327 aa).

Positions 13, 34, and 107 each coordinate NADPH. Sn-glycerol 3-phosphate is bound by residues Lys-107 and Gly-135. Residue Ala-139 participates in NADPH binding. Sn-glycerol 3-phosphate is bound by residues Lys-190, Asp-243, Ser-253, Arg-254, and Asn-255. The Proton acceptor role is filled by Lys-190. Residue Arg-254 participates in NADPH binding. The NADPH site is built by Val-276 and Glu-277.

The protein belongs to the NAD-dependent glycerol-3-phosphate dehydrogenase family.

The protein resides in the cytoplasm. The enzyme catalyses sn-glycerol 3-phosphate + NAD(+) = dihydroxyacetone phosphate + NADH + H(+). The catalysed reaction is sn-glycerol 3-phosphate + NADP(+) = dihydroxyacetone phosphate + NADPH + H(+). Its pathway is membrane lipid metabolism; glycerophospholipid metabolism. Catalyzes the reduction of the glycolytic intermediate dihydroxyacetone phosphate (DHAP) to sn-glycerol 3-phosphate (G3P), the key precursor for phospholipid synthesis. The sequence is that of Glycerol-3-phosphate dehydrogenase [NAD(P)+] from Rhizobium etli (strain ATCC 51251 / DSM 11541 / JCM 21823 / NBRC 15573 / CFN 42).